The sequence spans 210 residues: Riboflavin kinase (210 aa).

Positions 1–81 are H-T-H motif-like; the sequence is MECRERRLAA…DLLRYFNIAS (81 aa). The segment at 82-210 is riboflavin kinase; the sequence is IRLVGRVVSG…GDVVEVEVLL (129 aa). 91–96 contacts CDP; it reads GLGEGA. Positions 120 and 122 each coordinate Mg(2+). Residues T177 and E185 each coordinate FMN. 190–193 contacts CDP; the sequence is VKLR.

Belongs to the archaeal riboflavin kinase family. Mg(2+) is required as a cofactor.

It carries out the reaction riboflavin + CTP = CDP + FMN + H(+). Its pathway is cofactor biosynthesis; FMN biosynthesis; FMN from riboflavin (CTP route): step 1/1. Its function is as follows. Catalyzes the CTP-dependent phosphorylation of riboflavin (vitamin B2) to form flavin mononucleotide (FMN). The chain is Riboflavin kinase (ribK) from Pyrobaculum arsenaticum (strain DSM 13514 / JCM 11321 / PZ6).